The chain runs to 319 residues: Lipoyl synthase (319 aa).

Residues 1 to 24 (MAVVIDTVGARPRHPEKQANPDTP) are disordered. A compositionally biased stretch (basic and acidic residues) spans 13–24 (RHPEKQANPDTP). [4Fe-4S] cluster-binding residues include cysteine 58, cysteine 63, cysteine 69, cysteine 84, cysteine 88, cysteine 91, and serine 298. The Radical SAM core domain occupies 70 to 287 (WDKSHATFMI…EEIARAKGFL (218 aa)).

The protein belongs to the radical SAM superfamily. Lipoyl synthase family. It depends on [4Fe-4S] cluster as a cofactor.

The protein localises to the cytoplasm. It catalyses the reaction [[Fe-S] cluster scaffold protein carrying a second [4Fe-4S](2+) cluster] + N(6)-octanoyl-L-lysyl-[protein] + 2 oxidized [2Fe-2S]-[ferredoxin] + 2 S-adenosyl-L-methionine + 4 H(+) = [[Fe-S] cluster scaffold protein] + N(6)-[(R)-dihydrolipoyl]-L-lysyl-[protein] + 4 Fe(3+) + 2 hydrogen sulfide + 2 5'-deoxyadenosine + 2 L-methionine + 2 reduced [2Fe-2S]-[ferredoxin]. It functions in the pathway protein modification; protein lipoylation via endogenous pathway; protein N(6)-(lipoyl)lysine from octanoyl-[acyl-carrier-protein]: step 2/2. Catalyzes the radical-mediated insertion of two sulfur atoms into the C-6 and C-8 positions of the octanoyl moiety bound to the lipoyl domains of lipoate-dependent enzymes, thereby converting the octanoylated domains into lipoylated derivatives. The protein is Lipoyl synthase of Phenylobacterium zucineum (strain HLK1).